A 462-amino-acid chain; its full sequence is S-alkyl-thiohydroximate lyase SUR1 (462 aa).

Belongs to the class-I pyridoxal-phosphate-dependent aminotransferase family. Pyridoxal 5'-phosphate serves as cofactor.

In terms of biological role, C-S lyase involved in glucosinolate biosynthesis. Converts S-(alkylacetohydroximoyl)-L-cysteine to thiohydroximate. Functions in auxin homeostasis. Probably required for glucosinolate activation in response to pathogens. This Arabidopsis thaliana (Mouse-ear cress) protein is S-alkyl-thiohydroximate lyase SUR1 (SUR1).